The chain runs to 340 residues: L-lysine 2,3-aminomutase (340 aa).

Residues arginine 106–lysine 321 enclose the Radical SAM core domain. [4Fe-4S] cluster-binding residues include cysteine 120, cysteine 124, and cysteine 127. Residue lysine 332 is modified to N6-(pyridoxal phosphate)lysine.

This sequence belongs to the radical SAM superfamily. KamA family. Requires [4Fe-4S] cluster as cofactor. The cofactor is pyridoxal 5'-phosphate.

It catalyses the reaction L-lysine = D-beta-lysine. Its function is as follows. With EpmA is involved in the beta-lysylation step of the post-translational modification of translation elongation factor P (EF-P) on 'Lys-34'. EpmB appears to act before EpmA. Displays lysine 2,3-aminomutase activity, producing (R)-beta-lysine from (S)-alpha-lysine (L-lysine). This chain is L-lysine 2,3-aminomutase (epmB), found in Buchnera aphidicola subsp. Baizongia pistaciae (strain Bp).